The following is a 1101-amino-acid chain: Type II inositol polyphosphate 5-phosphatase 15 (1101 aa).

A compositionally biased stretch (low complexity) spans 31 to 40 (RSAYSSSSSS). The disordered stretch occupies residues 31–54 (RSAYSSSSSSGDDESQPSVDDSNK). WD repeat units lie at residues 121–162 (LRET…GSGR), 180–219 (FGSAAVVCMIGDEGSRVVWSGHRDGRIRCWRLRGDHGIEE), 225–263 (AHRGPVLSIAISAYGDIWSGSEGGALKVWPWDGALGKSL), 403–432 (DDSRKTEAIVISVDGMIWTGSSNGILMRWD), 433–481 (GNGN…GGWV), and 483–519 (HSGPVIKMAIGAGYLFTLANHGGIRGWNVTSPGPLDN). Catalytic regions lie at residues 749 to 765 (DMVIFLGDFNYRLDDIT) and 828 to 843 (KKRIPAWCDRILYRDN). Lysine 907 is covalently cross-linked (Glycyl lysine isopeptide (Lys-Gly) (interchain with G-Cter in ubiquitin)).

The protein belongs to the inositol polyphosphate 5-phosphatase family. It depends on Mg(2+) as a cofactor. Predominantly expressed in interfascicular fibers and vascular bundles. Expressed in seedlings, stems, roots and flowers. Expressed at lower level in mature leaves.

The catalysed reaction is a 1,2-diacyl-sn-glycero-3-phospho-(1D-myo-inositol-4,5-bisphosphate) + H2O = a 1,2-diacyl-sn-glycero-3-phospho-(1D-myo-inositol 4-phosphate) + phosphate. It catalyses the reaction a 1,2-diacyl-sn-glycero-3-phospho-(1D-myo-inositol-3,4,5-trisphosphate) + H2O = a 1,2-diacyl-sn-glycero-3-phospho-(1D-myo-inositol-3,4-bisphosphate) + phosphate. It carries out the reaction 1D-myo-inositol 1,4,5-trisphosphate + H2O = 1D-myo-inositol 1,4-bisphosphate + phosphate. Has phosphatase activity toward PtdIns(4,5)P2, PtdIns(3,4,5)P3 and Ins(1,4,5)P3. Has a higher substrate affinity toward PtdIns(4,5)P2. Required for secondary wall synthesis and actin organization in fiber cells. The chain is Type II inositol polyphosphate 5-phosphatase 15 from Arabidopsis thaliana (Mouse-ear cress).